A 515-amino-acid chain; its full sequence is Alpha-1B adrenergic receptor (515 aa).

At 1–45 (MNPDLDTGHNTSAPAHWGELKDDNFTGPNQTSSNSTLPQLDVTRA) the chain is on the extracellular side. 3 N-linked (GlcNAc...) asparagine glycosylation sites follow: Asn-10, Asn-24, and Asn-34. Residues 46-70 (ISVGLVLGAFILFAIVGNILVILSV) traverse the membrane as a helical segment. Residues 71–83 (ACNRHLRTPTNYF) are Cytoplasmic-facing. Residues 84–105 (IVNLAIADLLLSFTVLPFSATL) traverse the membrane as a helical segment. At 106-115 (EVLGYWVLGR) the chain is on the extracellular side. A helical transmembrane segment spans residues 116–141 (IFCDIWAAVDVLCCTASILSLCAISI). Cys-118 and Cys-195 form a disulfide bridge. At 142–161 (DRYIGVRYSLQYPTLVTRRK) the chain is on the cytoplasmic side. The chain crosses the membrane as a helical span at residues 162–182 (AILALLSVWVLSTVISIGPLL). The Extracellular segment spans residues 183-201 (GWKEPAPNDDKECGVTEEP). A helical membrane pass occupies residues 202 to 224 (FYALFSSLGSFYIPLAVILVMYC). At 225–295 (RVYIVAKRTT…FSREKKAAKT (71 aa)) the chain is on the cytoplasmic side. Phosphothreonine is present on Thr-264. The helical transmembrane segment at 296–319 (LGIVVGMFILCWLPFFIALPLGSL) threads the bilayer. Residues 320 to 326 (FSTLKPP) lie on the Extracellular side of the membrane. Residues 327 to 351 (DAVFKVVFWLGYFNSCLNPIIYPCS) traverse the membrane as a helical segment. Over 352 to 515 (SKEFKRAFMR…SNMPLAPGHF (164 aa)) the chain is Cytoplasmic. The S-palmitoyl cysteine moiety is linked to residue Cys-365. The Nuclear localization signal motif lies at 368 to 378 (RGGRRRRRRRR). Disordered regions lie at residues 392–430 (GGSL…GYLG) and 474–515 (LGDP…PGHF). 2 stretches are compositionally biased toward polar residues: residues 410-424 (SCMS…SASP) and 484-498 (GDTS…TDLA).

This sequence belongs to the G-protein coupled receptor 1 family. Adrenergic receptor subfamily. ADRA1B sub-subfamily. As to quaternary structure, homo- and heterooligomer. Heterooligomerizes with ADRA1B homooligomers in cardiac myocytes. Interacts with CAVIN4.

The protein localises to the nucleus membrane. The protein resides in the cell membrane. It is found in the cytoplasm. Its subcellular location is the membrane. It localises to the caveola. In terms of biological role, this alpha-adrenergic receptor mediates its action by association with G proteins that activate a phosphatidylinositol-calcium second messenger system. Its effect is mediated by G(q) and G(11) proteins. Nuclear ADRA1A-ADRA1B heterooligomers regulate phenylephrine (PE)-stimulated ERK signaling in cardiac myocytes. The polypeptide is Alpha-1B adrenergic receptor (Adra1b) (Rattus norvegicus (Rat)).